The sequence spans 277 residues: Diaminopimelate epimerase (277 aa).

Substrate is bound by residues Asn-11 and Asn-62. Cys-71 acts as the Proton donor in catalysis. Substrate is bound by residues 72–73, Asn-160, Asn-193, and 211–212; these read GN and ER. Cys-220 (proton acceptor) is an active-site residue. Substrate is bound at residue 221–222; that stretch reads GT.

It belongs to the diaminopimelate epimerase family. In terms of assembly, homodimer.

The protein localises to the cytoplasm. The enzyme catalyses (2S,6S)-2,6-diaminopimelate = meso-2,6-diaminopimelate. Its pathway is amino-acid biosynthesis; L-lysine biosynthesis via DAP pathway; DL-2,6-diaminopimelate from LL-2,6-diaminopimelate: step 1/1. Its function is as follows. Catalyzes the stereoinversion of LL-2,6-diaminopimelate (L,L-DAP) to meso-diaminopimelate (meso-DAP), a precursor of L-lysine. The sequence is that of Diaminopimelate epimerase from Methanococcus maripaludis (strain C5 / ATCC BAA-1333).